Consider the following 679-residue polypeptide: Membrane-spanning 4-domains subfamily A member 14 (679 aa).

A run of 4 helical transmembrane segments spans residues 50 to 70 (ILLA…YIGF), 76 to 96 (LVVL…TGYL), 110 to 130 (VTGM…FTIL), and 141 to 161 (MPSF…LFFL). Disordered stretches follow at residues 218 to 259 (VSQP…EKKP), 331 to 363 (SEQT…ILSQ), 469 to 491 (KEWK…LNQQ), and 505 to 633 (VQAK…QAQV). Over residues 224–234 (KGREFVPDEQK) the composition is skewed to basic and acidic residues. Residues 337–348 (SKSTSSHVKQSS) are compositionally biased toward low complexity. Positions 469–478 (KEWKSEEELH) are enriched in basic and acidic residues. Composition is skewed to polar residues over residues 519–535 (DQQS…SLDQ) and 550–563 (KQAQ…QLPD). Over residues 580-601 (QSKDGQVKDQQTDKEQNSKKQT) the composition is skewed to basic and acidic residues. The segment covering 619 to 632 (GQFQNVQAEGQQAQ) has biased composition (polar residues).

Belongs to the MS4A family.

The protein localises to the membrane. May be involved in signal transduction as a component of a multimeric receptor complex. This Homo sapiens (Human) protein is Membrane-spanning 4-domains subfamily A member 14 (MS4A14).